Here is an 876-residue protein sequence, read N- to C-terminus: Leucine--tRNA ligase (876 aa).

The short motif at Pro-42–His-52 is the 'HIGH' region element. A 'KMSKS' region motif is present at residues Lys-634–Ser-638. Lys-637 provides a ligand contact to ATP.

It belongs to the class-I aminoacyl-tRNA synthetase family.

It localises to the cytoplasm. The catalysed reaction is tRNA(Leu) + L-leucine + ATP = L-leucyl-tRNA(Leu) + AMP + diphosphate. This is Leucine--tRNA ligase from Neisseria meningitidis serogroup C / serotype 2a (strain ATCC 700532 / DSM 15464 / FAM18).